A 373-amino-acid polypeptide reads, in one-letter code: Arfaptin-1 (373 aa).

The disordered stretch occupies residues methionine 1–glutamine 47. Position 2 is an N-acetylalanine (alanine 2). 7 positions are modified to phosphoserine: serine 5, serine 28, serine 36, serine 39, serine 69, serine 79, and serine 132. Positions aspartate 22–histidine 35 are enriched in basic and acidic residues. The region spanning threonine 153–lysine 353 is the AH domain. Phosphothreonine is present on threonine 361.

As to quaternary structure, forms homodimers or heterodimers with ARFIP2. Interacts with non-myristoylated GTP-bound ARF3, but not to GDP-bound ARF3. Interacts with ARF1. Binds with lower affinity to ARF5 and with very little affinity to ARF6. Interacts with ARL1. Interacts with ATG9A. In terms of processing, phosphorylated by PRKD1; phosphorylation delocalizes ARFIP1 from the Golgi and disrupts its ability to inhibit the activity of ADP-ribosylation factor, an important component of the vesicle scission machinery. In terms of tissue distribution, ubiquitously expressed. Higher levels in liver, pancreas, placenta, skeletal muscle and heart.

It localises to the golgi apparatus. The protein resides in the trans-Golgi network membrane. Plays a role in controlling biogenesis of secretory granules at the trans-Golgi network. Mechanistically, binds ARF-GTP at the neck of a growing secretory granule precursor and forms a protective scaffold. Once the granule precursor has been completely loaded, active PRKD1 phosphorylates ARFIP1 and releases it from ARFs. In turn, ARFs induce fission. Through this mechanism, ensures proper secretory granule formation at the Golgi of pancreatic beta cells. This Homo sapiens (Human) protein is Arfaptin-1.